The sequence spans 279 residues: Methyltransferase ausD (279 aa).

S-adenosyl-L-methionine-binding positions include 124 to 125 and 152 to 153; these read DI and DV.

Belongs to the class I-like SAM-binding methyltransferase superfamily. As to quaternary structure, homodimer.

It participates in secondary metabolite biosynthesis; terpenoid biosynthesis. Its function is as follows. Methyltransferase; part of the gene cluster A that mediates the biosynthesis of the fungal meroterpenoid acetoxydehydroaustin. The first step of the pathway is the synthesis of 3,5-dimethylorsellinic acid by the polyketide synthase ausA. 3,5-dimethylorsellinic acid is then prenylated by the polyprenyl transferase ausN. Further epoxidation by the FAD-dependent monooxygenase ausM and cyclization by the probable terpene cyclase ausL lead to the formation of protoaustinoid A. Protoaustinoid A is then oxidized to spiro-lactone preaustinoid A3 by the combined action of the FAD-binding monooxygenases ausB and ausC, and the dioxygenase ausE. Acid-catalyzed keto-rearrangement and ring contraction of the tetraketide portion of preaustinoid A3 by ausJ lead to the formation of preaustinoid A4. The aldo-keto reductase ausK, with the help of ausH, is involved in the next step by transforming preaustinoid A4 into isoaustinone which is in turn hydroxylated by the P450 monooxygenase ausI to form austinolide. The cytochrome P450 monooxygenase ausG then modifies austinolide to austinol. Austinol is further acetylated to austin by the O-acetyltransferase ausP, which spontaneously changes to dehydroaustin. The cytochrome P450 monooxygenase then converts dehydroaustin is into 7-dehydrodehydroaustin. The hydroxylation catalyzed by ausR permits the second O-acetyltransferase ausQ to add an additional acetyl group to the molecule, leading to the formation of acetoxydehydroaustin. Due to genetic rearrangements of the clusters and the subsequent loss of some enzymes, the end product of the Penicillium brasilianum austinoid biosynthesis clusters is acetoxydehydroaustin. The protein is Methyltransferase ausD of Penicillium brasilianum.